The chain runs to 300 residues: Acetylglutamate kinase (300 aa).

Residues 68-69, Arg-90, and Asn-195 each bind substrate; that span reads GG.

The protein belongs to the acetylglutamate kinase family. ArgB subfamily.

Its subcellular location is the cytoplasm. It carries out the reaction N-acetyl-L-glutamate + ATP = N-acetyl-L-glutamyl 5-phosphate + ADP. It functions in the pathway amino-acid biosynthesis; L-arginine biosynthesis; N(2)-acetyl-L-ornithine from L-glutamate: step 2/4. Functionally, catalyzes the ATP-dependent phosphorylation of N-acetyl-L-glutamate. The sequence is that of Acetylglutamate kinase from Azotobacter vinelandii (strain DJ / ATCC BAA-1303).